The chain runs to 353 residues: Uroporphyrinogen decarboxylase (353 aa).

Substrate is bound by residues 35 to 39, Phe54, Asp84, Tyr160, Ser215, and His329; that span reads RQAGR.

It belongs to the uroporphyrinogen decarboxylase family. As to quaternary structure, homodimer.

It is found in the cytoplasm. It catalyses the reaction uroporphyrinogen III + 4 H(+) = coproporphyrinogen III + 4 CO2. It functions in the pathway porphyrin-containing compound metabolism; protoporphyrin-IX biosynthesis; coproporphyrinogen-III from 5-aminolevulinate: step 4/4. Functionally, catalyzes the decarboxylation of four acetate groups of uroporphyrinogen-III to yield coproporphyrinogen-III. The protein is Uroporphyrinogen decarboxylase of Staphylococcus epidermidis (strain ATCC 12228 / FDA PCI 1200).